A 108-amino-acid chain; its full sequence is Hydrogenase expression/formation protein HupN (108 aa).

The tract at residues 88–108 is disordered; that stretch reads REPQLPPHLQAQLPPKEPNSP.

Belongs to the HupF/HypC family.

This chain is Hydrogenase expression/formation protein HupN (hupN), found in Azotobacter chroococcum mcd 1.